Reading from the N-terminus, the 450-residue chain is Asparagine--tRNA ligase (450 aa).

Belongs to the class-II aminoacyl-tRNA synthetase family. In terms of assembly, homodimer.

The protein localises to the cytoplasm. The catalysed reaction is tRNA(Asn) + L-asparagine + ATP = L-asparaginyl-tRNA(Asn) + AMP + diphosphate + H(+). This is Asparagine--tRNA ligase from Metamycoplasma arthritidis (strain 158L3-1) (Mycoplasma arthritidis).